The sequence spans 393 residues: S-adenosylmethionine synthase 1 (393 aa).

Residue E9 participates in Mg(2+) binding. H15 lines the ATP pocket. Residue E43 coordinates K(+). 2 residues coordinate L-methionine: E56 and Q99. ATP is bound by residues 167–169, 235–238, D246, 252–253, A269, K273, and K277; these read DGK, SGRF, and RK. Residue D246 coordinates L-methionine. Residue K277 coordinates L-methionine.

It belongs to the AdoMet synthase family. As to quaternary structure, homotetramer. Mn(2+) is required as a cofactor. The cofactor is Mg(2+). It depends on Co(2+) as a cofactor. Requires K(+) as cofactor.

The protein localises to the cytoplasm. It carries out the reaction L-methionine + ATP + H2O = S-adenosyl-L-methionine + phosphate + diphosphate. It functions in the pathway amino-acid biosynthesis; S-adenosyl-L-methionine biosynthesis; S-adenosyl-L-methionine from L-methionine: step 1/1. Functionally, catalyzes the formation of S-adenosylmethionine from methionine and ATP. The reaction comprises two steps that are both catalyzed by the same enzyme: formation of S-adenosylmethionine (AdoMet) and triphosphate, and subsequent hydrolysis of the triphosphate. The chain is S-adenosylmethionine synthase 1 (SAMS1) from Brassica juncea (Indian mustard).